The primary structure comprises 238 residues: 7-cyano-7-deazaguanine synthase 1 (238 aa).

14-24 (FSGGQDSATCL) serves as a coordination point for ATP. Zn(2+) contacts are provided by Cys-202, Cys-217, Cys-220, and Cys-223.

It belongs to the QueC family. Requires Zn(2+) as cofactor.

It carries out the reaction 7-carboxy-7-deazaguanine + NH4(+) + ATP = 7-cyano-7-deazaguanine + ADP + phosphate + H2O + H(+). Its pathway is purine metabolism; 7-cyano-7-deazaguanine biosynthesis. Functionally, catalyzes the ATP-dependent conversion of 7-carboxy-7-deazaguanine (CDG) to 7-cyano-7-deazaguanine (preQ(0)). The chain is 7-cyano-7-deazaguanine synthase 1 from Rhodopseudomonas palustris (strain HaA2).